A 316-amino-acid polypeptide reads, in one-letter code: Glutathione synthetase (316 aa).

An ATP-grasp domain is found at 125 to 310 (KLFTAWFSDL…ITGMLMDAIE (186 aa)). 151 to 207 (WEKHSDIILKPLDGMGGASIFRVKEGDPNLGVIAETLTEHGTRYCMAQNYLPAIKDG) serves as a coordination point for ATP. Positions 281 and 283 each coordinate Mg(2+).

The protein belongs to the prokaryotic GSH synthase family. Homotetramer. Mg(2+) serves as cofactor. Mn(2+) is required as a cofactor.

It carries out the reaction gamma-L-glutamyl-L-cysteine + glycine + ATP = glutathione + ADP + phosphate + H(+). Its pathway is sulfur metabolism; glutathione biosynthesis; glutathione from L-cysteine and L-glutamate: step 2/2. Its activity is regulated as follows. Inhibited by 7,8-dihydrofolate, methotrexate and trimethoprim. This Escherichia coli (strain K12) protein is Glutathione synthetase (gshB).